Consider the following 427-residue polypeptide: Serine--tRNA ligase (427 aa).

230-232 (TAE) lines the L-serine pocket. 261 to 263 (RAE) serves as a coordination point for ATP. Residue Glu284 participates in L-serine binding. 348–351 (EISS) contributes to the ATP binding site. Residue Ser384 coordinates L-serine.

This sequence belongs to the class-II aminoacyl-tRNA synthetase family. Type-1 seryl-tRNA synthetase subfamily. Homodimer. The tRNA molecule binds across the dimer.

It localises to the cytoplasm. It carries out the reaction tRNA(Ser) + L-serine + ATP = L-seryl-tRNA(Ser) + AMP + diphosphate + H(+). It catalyses the reaction tRNA(Sec) + L-serine + ATP = L-seryl-tRNA(Sec) + AMP + diphosphate + H(+). It participates in aminoacyl-tRNA biosynthesis; selenocysteinyl-tRNA(Sec) biosynthesis; L-seryl-tRNA(Sec) from L-serine and tRNA(Sec): step 1/1. Its function is as follows. Catalyzes the attachment of serine to tRNA(Ser). Is also able to aminoacylate tRNA(Sec) with serine, to form the misacylated tRNA L-seryl-tRNA(Sec), which will be further converted into selenocysteinyl-tRNA(Sec). The chain is Serine--tRNA ligase from Moorella thermoacetica (strain ATCC 39073 / JCM 9320).